The sequence spans 504 residues: UDP-N-acetylmuramoylalanine--D-glutamate ligase (504 aa).

G129–T135 is an ATP binding site.

The protein belongs to the MurCDEF family.

It localises to the cytoplasm. The catalysed reaction is UDP-N-acetyl-alpha-D-muramoyl-L-alanine + D-glutamate + ATP = UDP-N-acetyl-alpha-D-muramoyl-L-alanyl-D-glutamate + ADP + phosphate + H(+). It participates in cell wall biogenesis; peptidoglycan biosynthesis. Functionally, cell wall formation. Catalyzes the addition of glutamate to the nucleotide precursor UDP-N-acetylmuramoyl-L-alanine (UMA). This chain is UDP-N-acetylmuramoylalanine--D-glutamate ligase, found in Burkholderia pseudomallei (strain 668).